The sequence spans 121 residues: Heme-degrading monooxygenase (121 aa).

An ABM domain is found at 2–101 (IIVTNTIKVE…EQREDRKGIV (100 aa)). A Fe cation-binding site is contributed by N6. Residues 76–98 (KSDSFKKAHGRTKDTREQREDRK) are disordered. Residues 78–98 (DSFKKAHGRTKDTREQREDRK) show a composition bias toward basic and acidic residues. Heme is bound at residue H84.

This sequence belongs to the antibiotic biosynthesis monooxygenase family. Heme-degrading monooxygenase IsdG subfamily. As to quaternary structure, homodimer.

The protein resides in the cytoplasm. The enzyme catalyses heme b + 3 reduced [NADPH--hemoprotein reductase] + 3 O2 = biliverdin IXalpha + CO + Fe(2+) + 3 oxidized [NADPH--hemoprotein reductase] + 3 H2O + H(+). Allows bacterial pathogens to use the host heme as an iron source. Catalyzes the oxidative degradation of the heme macrocyclic porphyrin ring to the biliverdin in the presence of a suitable electron donor such as ascorbate or NADPH--cytochrome P450 reductase, with subsequent release of free iron. In Listeria innocua serovar 6a (strain ATCC BAA-680 / CLIP 11262), this protein is Heme-degrading monooxygenase.